We begin with the raw amino-acid sequence, 677 residues long: Methionine--tRNA ligase (677 aa).

Positions 15–25 match the 'HIGH' region motif; that stretch reads PYANGSIHLGH. Positions 146, 149, 159, and 162 each coordinate Zn(2+). The 'KMSKS' region signature appears at 333–337; that stretch reads KMSKS. K336 contributes to the ATP binding site. The tRNA-binding domain occupies 575-677; that stretch reads DFAKVDLRVA…AGAKPGHQVK (103 aa).

Belongs to the class-I aminoacyl-tRNA synthetase family. MetG type 1 subfamily. Homodimer. Requires Zn(2+) as cofactor.

It localises to the cytoplasm. The catalysed reaction is tRNA(Met) + L-methionine + ATP = L-methionyl-tRNA(Met) + AMP + diphosphate. Its function is as follows. Is required not only for elongation of protein synthesis but also for the initiation of all mRNA translation through initiator tRNA(fMet) aminoacylation. The polypeptide is Methionine--tRNA ligase (Escherichia coli (strain SE11)).